We begin with the raw amino-acid sequence, 238 residues long: Urease subunit alpha (238 aa).

Residues 1-102 (MKLTPKELDK…LVTVHTPIEA (102 aa)) are urease gamma. The segment at 103 to 238 (NGKLVPGELF…DDNYVKTIKE (136 aa)) is urease beta.

In the N-terminal section; belongs to the urease gamma subunit family. The protein in the C-terminal section; belongs to the urease beta subunit family. In terms of assembly, heterohexamer of 3 UreA (alpha) and 3 UreB (beta) subunits. Four heterohexamers assemble to form a 16 nm dodecameric complex.

The catalysed reaction is urea + 2 H2O + H(+) = hydrogencarbonate + 2 NH4(+). It functions in the pathway nitrogen metabolism; urea degradation; CO(2) and NH(3) from urea (urease route): step 1/1. The protein is Urease subunit alpha of Helicobacter pylori (strain J99 / ATCC 700824) (Campylobacter pylori J99).